Reading from the N-terminus, the 701-residue chain is Elongation factor G (701 aa).

The tr-type G domain occupies 8-286 (ERIRNIGIIA…AVVYYLPSPV (279 aa)). GTP is bound by residues 17-24 (AHIDAGKT), 85-89 (DTPGH), and 139-142 (NKMD).

It belongs to the TRAFAC class translation factor GTPase superfamily. Classic translation factor GTPase family. EF-G/EF-2 subfamily.

It is found in the cytoplasm. In terms of biological role, catalyzes the GTP-dependent ribosomal translocation step during translation elongation. During this step, the ribosome changes from the pre-translocational (PRE) to the post-translocational (POST) state as the newly formed A-site-bound peptidyl-tRNA and P-site-bound deacylated tRNA move to the P and E sites, respectively. Catalyzes the coordinated movement of the two tRNA molecules, the mRNA and conformational changes in the ribosome. The protein is Elongation factor G of Roseiflexus castenholzii (strain DSM 13941 / HLO8).